Here is a 548-residue protein sequence, read N- to C-terminus: DNA-binding protein REPIN1 (548 aa).

Residues 1–47 form a disordered region; that stretch reads MLERRCRGPTAMGPAHPWLFSGPSQESSQPNRGLRYQGKSVAQPGGP. Over residues 22-31 the composition is skewed to polar residues; it reads GPSQESSQPN. Position 27 is a phosphoserine (Ser-27). Lys-39 carries the N6-acetyllysine modification. A C2H2-type 1; atypical zinc finger spans residues 53 to 75; the sequence is HRCAHCRKRFPGWVALWLHTRRC. C2H2-type zinc fingers lie at residues 81 to 103 and 112 to 134; these read LPCHECNQRFRHAPFLALHLQVH and FICHLCGHSFRGWVALVLHLRAH. Residues 141-163 form a C2H2-type 4; atypical zinc finger; the sequence is ITCPECNKRFWRQKQLRAHLRRC. 11 consecutive C2H2-type zinc fingers follow at residues 173 to 195, 232 to 254, 260 to 282, 288 to 310, 356 to 378, 384 to 406, 412 to 434, 440 to 462, 468 to 490, 496 to 518, and 524 to 546; these read FICGNCGRSFAQWDQLVVHKRVH, FQCACCGKRFRHKPNLIAHRRVH, HQCPECGKRFTNKPYLTSHRRIH, YPCTECGRRFRHKPNLLSHSKIH, HSCTDCGRSFRLERFLRLHQRQH, FTCTECGKNFGKKTHLVAHSRVH, FACEECGRRFSQGSHLAAHRRDH, FVCPDCGKAFRHKPYLAAHRRIH, YVCPDCGKAFSQKSNLVSHRRIH, YACPDCDRSFSQKSNLITHRKSH, and FCCAICGQTFDDEDRLLMHQKKH. Lys-272 carries the post-translational modification N6-acetyllysine.

As to quaternary structure, homodimers and homomultimers. Found in a complex with RIP60 and RIP100. In terms of tissue distribution, expressed in the liver and in subcutaneous and visceral adipose tissue.

The protein resides in the nucleus. Its subcellular location is the cytoplasm. The protein localises to the cytosol. Its function is as follows. Sequence-specific double-stranded DNA-binding protein. Binds ATT-rich and T-rich DNA sequences and facilitates DNA bending. May regulate the expression of genes involved in cellular fatty acid import, including SCARB1/CD36, and genes involved in lipid droplet formation. May regulate the expression of LCN2, and thereby influence iron metabolism and apoptosis-related pathways. May regulate the expression of genes involved in glucose transport. The protein is DNA-binding protein REPIN1 (Repin1) of Rattus norvegicus (Rat).